Consider the following 335-residue polypeptide: Holliday junction branch migration complex subunit RuvB (335 aa).

The tract at residues 1–183 (MDERIISSET…FGVIDHLEFY (183 aa)) is large ATPase domain (RuvB-L). ATP-binding positions include Leu-22, Arg-23, Gly-64, Lys-67, Thr-68, Thr-69, 130–132 (EDY), Arg-173, Tyr-183, and Arg-220. A Mg(2+)-binding site is contributed by Thr-68. The segment at 184 to 254 (TEEQLTEIVL…LAKEALTLLQ (71 aa)) is small ATPAse domain (RuvB-S). The segment at 257–335 (PRGLDTIDQK…HLGISYEKEV (79 aa)) is head domain (RuvB-H). DNA is bound by residues Arg-293, Arg-312, and Arg-317.

Belongs to the RuvB family. As to quaternary structure, homohexamer. Forms an RuvA(8)-RuvB(12)-Holliday junction (HJ) complex. HJ DNA is sandwiched between 2 RuvA tetramers; dsDNA enters through RuvA and exits via RuvB. An RuvB hexamer assembles on each DNA strand where it exits the tetramer. Each RuvB hexamer is contacted by two RuvA subunits (via domain III) on 2 adjacent RuvB subunits; this complex drives branch migration. In the full resolvosome a probable DNA-RuvA(4)-RuvB(12)-RuvC(2) complex forms which resolves the HJ.

Its subcellular location is the cytoplasm. The enzyme catalyses ATP + H2O = ADP + phosphate + H(+). Functionally, the RuvA-RuvB-RuvC complex processes Holliday junction (HJ) DNA during genetic recombination and DNA repair, while the RuvA-RuvB complex plays an important role in the rescue of blocked DNA replication forks via replication fork reversal (RFR). RuvA specifically binds to HJ cruciform DNA, conferring on it an open structure. The RuvB hexamer acts as an ATP-dependent pump, pulling dsDNA into and through the RuvAB complex. RuvB forms 2 homohexamers on either side of HJ DNA bound by 1 or 2 RuvA tetramers; 4 subunits per hexamer contact DNA at a time. Coordinated motions by a converter formed by DNA-disengaged RuvB subunits stimulates ATP hydrolysis and nucleotide exchange. Immobilization of the converter enables RuvB to convert the ATP-contained energy into a lever motion, pulling 2 nucleotides of DNA out of the RuvA tetramer per ATP hydrolyzed, thus driving DNA branch migration. The RuvB motors rotate together with the DNA substrate, which together with the progressing nucleotide cycle form the mechanistic basis for DNA recombination by continuous HJ branch migration. Branch migration allows RuvC to scan DNA until it finds its consensus sequence, where it cleaves and resolves cruciform DNA. This chain is Holliday junction branch migration complex subunit RuvB, found in Listeria monocytogenes serotype 4a (strain HCC23).